Reading from the N-terminus, the 268-residue chain is Ribosomal RNA small subunit methyltransferase A (268 aa).

6 residues coordinate S-adenosyl-L-methionine: Asn-16, Leu-18, Gly-43, Glu-64, Asp-89, and Asn-110.

This sequence belongs to the class I-like SAM-binding methyltransferase superfamily. rRNA adenine N(6)-methyltransferase family. RsmA subfamily.

It localises to the cytoplasm. It carries out the reaction adenosine(1518)/adenosine(1519) in 16S rRNA + 4 S-adenosyl-L-methionine = N(6)-dimethyladenosine(1518)/N(6)-dimethyladenosine(1519) in 16S rRNA + 4 S-adenosyl-L-homocysteine + 4 H(+). Its function is as follows. Specifically dimethylates two adjacent adenosines (A1518 and A1519) in the loop of a conserved hairpin near the 3'-end of 16S rRNA in the 30S particle. May play a critical role in biogenesis of 30S subunits. The sequence is that of Ribosomal RNA small subunit methyltransferase A from Pseudomonas syringae pv. syringae (strain B728a).